A 264-amino-acid chain; its full sequence is Glutamate racemase (264 aa).

Substrate is bound by residues 9–10 (DS) and 41–42 (YG). C72 functions as the Proton donor/acceptor in the catalytic mechanism. 73–74 (NT) serves as a coordination point for substrate. Catalysis depends on C183, which acts as the Proton donor/acceptor. 184–185 (TH) serves as a coordination point for substrate.

The protein belongs to the aspartate/glutamate racemases family.

It catalyses the reaction L-glutamate = D-glutamate. It participates in cell wall biogenesis; peptidoglycan biosynthesis. Provides the (R)-glutamate required for cell wall biosynthesis. This Geobacillus kaustophilus (strain HTA426) protein is Glutamate racemase.